The primary structure comprises 450 residues: Benzene 1,2-dioxygenase subunit alpha (450 aa).

The 108-residue stretch at 56-163 (LLGHETHIRK…VETYKGLIFA (108 aa)) folds into the Rieske domain. Residues Cys-96, His-98, Cys-116, and His-119 each contribute to the [2Fe-2S] cluster site. Residues His-222 and His-228 each coordinate Fe cation.

Belongs to the bacterial ring-hydroxylating dioxygenase alpha subunit family. This dioxygenase system consists of four proteins: the two subunits of the hydroxylase component (BedC1 and BedC2), a ferredoxin (BedB) and a ferredoxin reductase (BedA). Requires [2Fe-2S] cluster as cofactor. It depends on Fe cation as a cofactor.

The enzyme catalyses benzene + NADH + O2 + H(+) = cis-1,2-dihydrobenzene-1,2-diol + NAD(+). It participates in aromatic compound metabolism; benzene degradation; catechol from benzene: step 1/2. This Pseudomonas putida (Arthrobacter siderocapsulatus) protein is Benzene 1,2-dioxygenase subunit alpha (bedC1).